The following is a 707-amino-acid chain: Ribosomal RNA large subunit methyltransferase K/L (707 aa).

The THUMP domain maps to 44 to 155 (VIYNLCLWSR…NDILTVSFDL (112 aa)).

Belongs to the methyltransferase superfamily. RlmKL family.

The protein localises to the cytoplasm. The catalysed reaction is guanosine(2445) in 23S rRNA + S-adenosyl-L-methionine = N(2)-methylguanosine(2445) in 23S rRNA + S-adenosyl-L-homocysteine + H(+). The enzyme catalyses guanosine(2069) in 23S rRNA + S-adenosyl-L-methionine = N(2)-methylguanosine(2069) in 23S rRNA + S-adenosyl-L-homocysteine + H(+). Functionally, specifically methylates the guanine in position 2445 (m2G2445) and the guanine in position 2069 (m7G2069) of 23S rRNA. This Legionella pneumophila (strain Lens) protein is Ribosomal RNA large subunit methyltransferase K/L.